We begin with the raw amino-acid sequence, 209 residues long: Thymidylate kinase (209 aa).

Position 10 to 17 (10 to 17 (GIDGCGKT)) interacts with ATP.

This sequence belongs to the thymidylate kinase family.

The catalysed reaction is dTMP + ATP = dTDP + ADP. Phosphorylation of dTMP to form dTDP in both de novo and salvage pathways of dTTP synthesis. The polypeptide is Thymidylate kinase (Synechococcus sp. (strain CC9605)).